The sequence spans 158 residues: Transcription factor BTF3 homolog 4 (158 aa).

Positions 33–98 (TADDKKLQSS…AETKQLTEML (66 aa)) constitute an NAC-A/B domain. Residues 125 to 158 (LDNKAPKAEDIDEEDDDVPDLVENFDEASKNEAN) form a disordered region. Positions 134 to 150 (DIDEEDDDVPDLVENFD) are enriched in acidic residues.

It belongs to the NAC-beta family.

In Danio rerio (Zebrafish), this protein is Transcription factor BTF3 homolog 4 (btf3l4).